We begin with the raw amino-acid sequence, 263 residues long: Small ribosomal subunit protein eS4 (263 aa).

Residues 42-104 (LPLIIFLRNR…TGENFRLIYD (63 aa)) enclose the S4 RNA-binding domain.

Belongs to the eukaryotic ribosomal protein eS4 family.

In Ictalurus punctatus (Channel catfish), this protein is Small ribosomal subunit protein eS4 (rps4).